Consider the following 238-residue polypeptide: Ribonuclease PH (238 aa).

Residues R86 and 124-126 (GTR) each bind phosphate.

Belongs to the RNase PH family. As to quaternary structure, homohexameric ring arranged as a trimer of dimers.

The catalysed reaction is tRNA(n+1) + phosphate = tRNA(n) + a ribonucleoside 5'-diphosphate. Phosphorolytic 3'-5' exoribonuclease that plays an important role in tRNA 3'-end maturation. Removes nucleotide residues following the 3'-CCA terminus of tRNAs; can also add nucleotides to the ends of RNA molecules by using nucleoside diphosphates as substrates, but this may not be physiologically important. Probably plays a role in initiation of 16S rRNA degradation (leading to ribosome degradation) during starvation. In Salmonella gallinarum (strain 287/91 / NCTC 13346), this protein is Ribonuclease PH.